The primary structure comprises 103 residues: Large ribosomal subunit protein bL21 (103 aa).

Belongs to the bacterial ribosomal protein bL21 family. In terms of assembly, part of the 50S ribosomal subunit. Contacts protein L20.

Functionally, this protein binds to 23S rRNA in the presence of protein L20. The sequence is that of Large ribosomal subunit protein bL21 from Mycobacterium leprae (strain Br4923).